The primary structure comprises 227 residues: Cytochrome c oxidase subunit 2 (227 aa).

Over 1–14 the chain is Mitochondrial intermembrane; the sequence is MAYPFQLGLQDATS. The helical transmembrane segment at 15 to 45 threads the bilayer; sequence PIMEELLHFHDHTLMIVFLISSLVLYIISLM. Residues 46-59 lie on the Mitochondrial matrix side of the membrane; the sequence is LTTKLTHTSTMDAQ. The chain crosses the membrane as a helical span at residues 60–87; that stretch reads EVETVWTILPAIILILIALPSLRILYMM. Topologically, residues 88-227 are mitochondrial intermembrane; sequence DEINNPSLTV…YFEAWSALMV (140 aa). Cu cation is bound by residues H161, C196, E198, C200, H204, and M207. Residue E198 participates in Mg(2+) binding. At Y218 the chain carries Phosphotyrosine.

The protein belongs to the cytochrome c oxidase subunit 2 family. As to quaternary structure, component of the cytochrome c oxidase (complex IV, CIV), a multisubunit enzyme composed of 14 subunits. The complex is composed of a catalytic core of 3 subunits MT-CO1, MT-CO2 and MT-CO3, encoded in the mitochondrial DNA, and 11 supernumerary subunits COX4I, COX5A, COX5B, COX6A, COX6B, COX6C, COX7A, COX7B, COX7C, COX8 and NDUFA4, which are encoded in the nuclear genome. The complex exists as a monomer or a dimer and forms supercomplexes (SCs) in the inner mitochondrial membrane with NADH-ubiquinone oxidoreductase (complex I, CI) and ubiquinol-cytochrome c oxidoreductase (cytochrome b-c1 complex, complex III, CIII), resulting in different assemblies (supercomplex SCI(1)III(2)IV(1) and megacomplex MCI(2)III(2)IV(2)). Found in a complex with TMEM177, COA6, COX18, COX20, SCO1 and SCO2. Interacts with TMEM177 in a COX20-dependent manner. Interacts with COX20. Interacts with COX16. Cu cation is required as a cofactor.

The protein localises to the mitochondrion inner membrane. The catalysed reaction is 4 Fe(II)-[cytochrome c] + O2 + 8 H(+)(in) = 4 Fe(III)-[cytochrome c] + 2 H2O + 4 H(+)(out). In terms of biological role, component of the cytochrome c oxidase, the last enzyme in the mitochondrial electron transport chain which drives oxidative phosphorylation. The respiratory chain contains 3 multisubunit complexes succinate dehydrogenase (complex II, CII), ubiquinol-cytochrome c oxidoreductase (cytochrome b-c1 complex, complex III, CIII) and cytochrome c oxidase (complex IV, CIV), that cooperate to transfer electrons derived from NADH and succinate to molecular oxygen, creating an electrochemical gradient over the inner membrane that drives transmembrane transport and the ATP synthase. Cytochrome c oxidase is the component of the respiratory chain that catalyzes the reduction of oxygen to water. Electrons originating from reduced cytochrome c in the intermembrane space (IMS) are transferred via the dinuclear copper A center (CU(A)) of subunit 2 and heme A of subunit 1 to the active site in subunit 1, a binuclear center (BNC) formed by heme A3 and copper B (CU(B)). The BNC reduces molecular oxygen to 2 water molecules using 4 electrons from cytochrome c in the IMS and 4 protons from the mitochondrial matrix. This Cuon alpinus (Dhole) protein is Cytochrome c oxidase subunit 2 (MT-CO2).